The primary structure comprises 436 residues: UBX domain-containing protein 7 (436 aa).

Lysine 19 is covalently cross-linked (Glycyl lysine isopeptide (Lys-Gly) (interchain with G-Cter in ubiquitin)). The tract at residues alanine 115–asparagine 141 is disordered. A UBX domain is found at leucine 212–leucine 290. Residues aspartate 325 to arginine 346 are compositionally biased toward basic and acidic residues. Disordered stretches follow at residues aspartate 325–serine 357 and serine 371–lysine 436. Residues serine 347 to serine 357 are compositionally biased toward low complexity. The span at serine 371 to asparagine 408 shows a compositional bias: polar residues. Serine 388 is modified (phosphoserine). Residues histidine 426–lysine 436 are compositionally biased toward basic and acidic residues.

As to quaternary structure, interacts with CDC48.

The protein localises to the endoplasmic reticulum. In terms of biological role, involved in CDC48-dependent protein degradation through the ubiquitin/proteasome pathway. The sequence is that of UBX domain-containing protein 7 (UBX7) from Saccharomyces cerevisiae (strain ATCC 204508 / S288c) (Baker's yeast).